The sequence spans 287 residues: Ribosomal RNA small subunit methyltransferase I (287 aa).

This sequence belongs to the methyltransferase superfamily. RsmI family.

It localises to the cytoplasm. It carries out the reaction cytidine(1402) in 16S rRNA + S-adenosyl-L-methionine = 2'-O-methylcytidine(1402) in 16S rRNA + S-adenosyl-L-homocysteine + H(+). Catalyzes the 2'-O-methylation of the ribose of cytidine 1402 (C1402) in 16S rRNA. In Streptococcus pyogenes serotype M3 (strain ATCC BAA-595 / MGAS315), this protein is Ribosomal RNA small subunit methyltransferase I.